Here is a 307-residue protein sequence, read N- to C-terminus: Leucine-rich repeat-containing protein 59 (307 aa).

M1 bears the N-acetylmethionine mark. Position 2 is an N-acetylthreonine; in Leucine-rich repeat-containing protein 59, N-terminally processed (T2). Residues 2–244 (TKTGSKGGNL…KPPPRKHNRS (243 aa)) are Cytoplasmic-facing. LRR repeat units follow at residues 10–31 (NLRD…NEVP), 40–62 (KATV…CGLT), 63–84 (HLVK…FGRL), 86–107 (NLQH…FAQL), and 109–128 (NLKW…AKVA). Residues S23 and S25 each carry the phosphoserine modification. K73 bears the N6-succinyllysine mark. K135 carries the post-translational modification N6-acetyllysine. Residues 148-216 (MKAVQADQER…KASKREQEKK (69 aa)) are a coiled coil. Residues 150–242 (AVQADQERER…PRKPPPRKHN (93 aa)) form a disordered region. Basic and acidic residues predominate over residues 154-221 (DQERERQRRL…EQEKKPKKET (68 aa)). Residues 229-242 (SGSRPRKPPPRKHN) show a composition bias toward basic residues. The helical transmembrane segment at 245 to 265 (WAVLKGLLLLLLLCVAGGLVV) threads the bilayer. At 266-307 (CRVTGLQQQPLCTSVNAIYDNAVQGLRHHEILQWVLQTDSQQ) the chain is on the lumenal side.

In terms of assembly, can form homodimers. Interacts with SGO1. Interacts with FGF1.

Its subcellular location is the microsome membrane. The protein resides in the endoplasmic reticulum membrane. It localises to the nucleus envelope. Its function is as follows. Required for nuclear import of FGF1, but not that of FGF2. Might regulate nuclear import of exogenous FGF1 by facilitating interaction with the nuclear import machinery and by transporting cytosolic FGF1 to, and possibly through, the nuclear pores. This chain is Leucine-rich repeat-containing protein 59 (Lrrc59), found in Rattus norvegicus (Rat).